The following is a 63-amino-acid chain: Large ribosomal subunit protein uL29 (63 aa).

Belongs to the universal ribosomal protein uL29 family.

This is Large ribosomal subunit protein uL29 from Yersinia pseudotuberculosis serotype O:1b (strain IP 31758).